The chain runs to 161 residues: MAKILKQPDLSDPQLKEKLKKGMGHNYYGEPAWPNDLLYIFPVVIMGTISLVIGLAVLDPAMIGEPSNPFATPLEILPEWYLYPVFQILRTVPSKLLGVLIQTTIPLGLMLIPFIENVNKFQNPFRRPIATSVFLFSVVFTLWLGIGATLPIDKSLTLGLF.

The next 3 helical transmembrane spans lie at 37–57 (LLYI…GLAV), 96–116 (LLGV…PFIE), and 132–152 (SVFL…TLPI).

It belongs to the cytochrome b family. PetD subfamily. The 4 large subunits of the cytochrome b6-f complex are cytochrome b6, subunit IV (17 kDa polypeptide, PetD), cytochrome f and the Rieske protein, while the 4 small subunits are PetG, PetL, PetM and PetN. The complex functions as a dimer.

The protein localises to the cellular thylakoid membrane. Functionally, component of the cytochrome b6-f complex, which mediates electron transfer between photosystem II (PSII) and photosystem I (PSI), cyclic electron flow around PSI, and state transitions. The chain is Cytochrome b6-f complex subunit 4 from Acaryochloris marina (strain MBIC 11017).